A 322-amino-acid polypeptide reads, in one-letter code: Ribosome biogenesis protein RLP7 (322 aa).

Residues 1-16 are compositionally biased toward polar residues; the sequence is MSSTQDSKAQTLNSNP. The tract at residues 1-52 is disordered; that stretch reads MSSTQDSKAQTLNSNPEILLRKRRNADRTRIERQELAKKKREEQIKKKRSNK. An N-acetylserine modification is found at Ser-2. Ser-14 carries the phosphoserine modification. Positions 26-45 are enriched in basic and acidic residues; sequence ADRTRIERQELAKKKREEQI. Thr-120 carries the post-translational modification Phosphothreonine. Ser-278 carries the phosphoserine modification.

This sequence belongs to the universal ribosomal protein uL30 family.

The protein resides in the nucleus. The protein localises to the nucleolus. Involved in the biogenesis of the 60S ribosomal subunit. May act as a specificity factor that binds precursor rRNAs and tethers the enzymes that carry out the early 5' to 3' exonucleolytic reactions that generate the mature rRNAs. This chain is Ribosome biogenesis protein RLP7 (RLP7), found in Saccharomyces cerevisiae (strain ATCC 204508 / S288c) (Baker's yeast).